The primary structure comprises 169 residues: Large ribosomal subunit protein uL23 (169 aa).

Residues 1-20 form a disordered region; it reads MAGKKVKSNTPKQDLSVSKS. Residues 8–20 show a composition bias toward polar residues; sequence SNTPKQDLSVSKS.

Belongs to the universal ribosomal protein uL23 family.

Functionally, this protein binds to a specific region on the 26S rRNA. The chain is Large ribosomal subunit protein uL23 (rpl23a) from Dictyostelium discoideum (Social amoeba).